Reading from the N-terminus, the 300-residue chain is MEQANPLRPDGESKGGVLAHLERLETQVSRSRKQSEELQSVQAQEGALGTKIHKLRRLRDELRAVVRHRRASVKACIANVEPNQTVEINEQEALEEKLENVKAILQAYHFTGLSGKLTSRGVCVCISTAFEGNLLDSYFVDLVIQKPLRIHHHSVPVFIPLEEIAAKYLQTNIQHFLFSLCEYLNAYSGRKYQADRLQSDFAALLTGPLQRNPLCNLLSFTYKLDPGGQSFPFCARLLYKDLTATLPTDVTVTCQGVEVLSTSWEEQRASHETLFCTKPLHQVFASFTRKGEKLDMSLVS.

Coiled-coil stretches lie at residues 18-42 (LAHL…QSVQ) and 83-109 (NQTV…QAYH). Phosphoserine is present on Ser35.

The protein belongs to the CENP-O/MCM21 family. As to quaternary structure, component of the CENPA-CAD complex, composed of CENPI, CENPK, CENPL, CENPO, CENPP, CENPQ, CENPR and CENPS. The CENPA-CAD complex interacts with the CENPA-NAC complex, at least composed of CENPA, CENPC, CENPH, CENPM, CENPN, CENPT and CENPU.

The protein resides in the nucleus. It is found in the chromosome. It localises to the centromere. Its subcellular location is the kinetochore. Its function is as follows. Component of the CENPA-CAD (nucleosome distal) complex, a complex recruited to centromeres which is involved in assembly of kinetochore proteins, mitotic progression and chromosome segregation. May be involved in incorporation of newly synthesized CENPA into centromeres via its interaction with the CENPA-NAC complex. Modulates the kinetochore-bound levels of NDC80 complex. This is Centromere protein O (CENPO) from Homo sapiens (Human).